The following is a 153-amino-acid chain: ORM1-like protein 3 (153 aa).

Residues 1–17 form an important for ceramide level-sensing region; the sequence is MNVGTAHSEVNPNTRVM. The Cytoplasmic segment spans residues 1 to 21; it reads MNVGTAHSEVNPNTRVMNSRG. Transmembrane regions (helical) follow at residues 22-42 and 43-63; these read IWLS…SIPF and VSVP…MYIF. Topologically, residues 64 to 94 are cytoplasmic; that stretch reads LHTVKGTPFETPDQGKARLLTHWEQMDYGVQ. A helical membrane pass occupies residues 95-117; it reads FTASRKFLTITPIVLYFLTSFYT. The Extracellular portion of the chain corresponds to 118-121; sequence KYDQ. The chain crosses the membrane as a helical span at residues 122–142; sequence VHFILNTVSLMSVLIPKLPQL. Residue proline 137 is modified to Hydroxyproline. Residues 143-153 are Cytoplasmic-facing; the sequence is HGVRIFGINKY.

It belongs to the ORM family. In terms of assembly, ceramide-sensitive subunit of the serine palmitoyltransferase (SPT) complex, which is also composed of SPTLC1, SPTLC2/3 and SPTSSA/B. In terms of processing, when hydroxylated at Pro-137, ubiquitinated via 'Lys-48'-linkage, leading to proteasomal degradation. In endothelial cells, ORMDL3 proteasomal degradation is controlled by the sphingosine 1-phosphate receptor signaling pathway.

It is found in the endoplasmic reticulum membrane. Functionally, plays an essential role in the homeostatic regulation of sphingolipid de novo biosynthesis by modulating the activity of the serine palmitoyltransferase (SPT) in response to ceramide levels. When complexed to SPT, the binding of ceramides to its N-terminus stabilizes a conformation that block SPT substrate entry, hence preventing SPT catalytic activity. Through this mechanism, maintains ceramide levels at sufficient concentrations for the production of complex sphingolipids, but which prevents the accumulation of ceramides to levels that trigger apoptosis. In Rattus norvegicus (Rat), this protein is ORM1-like protein 3 (Ormdl3).